Here is a 76-residue protein sequence, read N- to C-terminus: Contulakin-G (76 aa).

The signal sequence occupies residues 1–22 (MQTAYWVMVMMMVWIAAPLSEG). Residues 23-50 (GKLNDVIRGLVPDDITPQLILGSLISRR) constitute a propeptide that is removed on maturation. Pyrrolidone carboxylic acid is present on Gln-51. The disordered stretch occupies residues 51–76 (QSEEGGSNATKKPYILRASDQVASGP). Thr-60 is a glycosylation site (O-linked (GalNAc...) threonine). The propeptide occupies 67 to 76 (RASDQVASGP).

The protein belongs to the conotoxin C superfamily. Post-translationally, O-glycosylated. The glycosylation seems to enhance the affinity to the neurotensin receptors. Expressed by the venom duct.

Its subcellular location is the secreted. Functionally, acts as an agonist of neurotensin receptors. It binds to human neurotensin type 1 receptor (NTSR1), rat neurotensin types 1 and 2 receptors (NTSR1/NTSR2) and mouse neurotensin type 3 receptor (SORT1). This chain is Contulakin-G, found in Conus geographus (Geography cone).